Reading from the N-terminus, the 201-residue chain is Probable nicotinate-nucleotide adenylyltransferase (201 aa).

This sequence belongs to the NadD family.

It catalyses the reaction nicotinate beta-D-ribonucleotide + ATP + H(+) = deamido-NAD(+) + diphosphate. It participates in cofactor biosynthesis; NAD(+) biosynthesis; deamido-NAD(+) from nicotinate D-ribonucleotide: step 1/1. Catalyzes the reversible adenylation of nicotinate mononucleotide (NaMN) to nicotinic acid adenine dinucleotide (NaAD). The sequence is that of Probable nicotinate-nucleotide adenylyltransferase from Clostridium botulinum (strain ATCC 19397 / Type A).